Reading from the N-terminus, the 516-residue chain is Cytochrome P450 93G1 (516 aa).

A helical membrane pass occupies residues L11–V31. Residue C454 coordinates heme.

Belongs to the cytochrome P450 family. It depends on heme as a cofactor.

It localises to the membrane. The enzyme catalyses a flavanone + reduced [NADPH--hemoprotein reductase] + O2 = a flavone + oxidized [NADPH--hemoprotein reductase] + 2 H2O + H(+). The protein operates within secondary metabolite biosynthesis; flavonoid biosynthesis. In terms of biological role, functions as a flavone synthase II (FNSII) that catalyzes the direct conversion of flavanones to flavones. In vitro, can convert naringenin and eriodictyol to apigenin and luteolin, respectively. Acts as a key branch point enzyme that channels flavanones to the biosynthesis of soluble tricin O-linked conjugates. The sequence is that of Cytochrome P450 93G1 from Oryza sativa subsp. japonica (Rice).